Here is a 343-residue protein sequence, read N- to C-terminus: Dihydroorotate dehydrogenase (quinone) (343 aa).

Residues 61 to 65 (AGLDK) and Thr85 each bind FMN. Lys65 lines the substrate pocket. Residue 110-114 (NRMGF) participates in substrate binding. FMN contacts are provided by Asn138 and Asn171. Residue Asn171 participates in substrate binding. Residue Ser174 is the Nucleophile of the active site. Substrate is bound at residue Asn176. The FMN site is built by Lys216 and Thr244. 245 to 246 (NT) contacts substrate. Residues Gly267, Gly296, and 317–318 (YS) each bind FMN.

Belongs to the dihydroorotate dehydrogenase family. Type 2 subfamily. Monomer. FMN serves as cofactor.

The protein localises to the cell membrane. The catalysed reaction is (S)-dihydroorotate + a quinone = orotate + a quinol. Its pathway is pyrimidine metabolism; UMP biosynthesis via de novo pathway; orotate from (S)-dihydroorotate (quinone route): step 1/1. In terms of biological role, catalyzes the conversion of dihydroorotate to orotate with quinone as electron acceptor. This chain is Dihydroorotate dehydrogenase (quinone), found in Pseudomonas syringae pv. syringae (strain B728a).